We begin with the raw amino-acid sequence, 590 residues long: DEAD-box ATP-dependent RNA helicase 27 (590 aa).

Residues 1–92 form a disordered region; the sequence is MAPAPATTSS…EKGNEGGSGI (92 aa). Acidic residues predominate over residues 27–62; that stretch reads SDSESEELSYDTAAADEEEGEEEAPNQMEELEEEQE. A coiled-coil region spans residues 40-87; the sequence is AADEEEGEEEAPNQMEELEEEQEEEKKEKKQKKEMSKEKKRKKEKGNE. Over residues 63 to 76 the composition is skewed to basic and acidic residues; sequence EEKKEKKQKKEMSK. A Q motif motif is present at residues 96 to 124; that stretch reads MLFSELGVSEPTARAIREMNYTYLTQIQA. Residues 127-302 enclose the Helicase ATP-binding domain; it reads IPHLLNGKDV…KLSFEKNEES (176 aa). ATP is bound at residue 140-147; it reads AKTGSGKT. The DEAD box motif lies at 250-253; sequence DEAD. A Helicase C-terminal domain is found at 335–488; sequence RFLVLYAFLK…NKVPNLQSHL (154 aa). The tract at residues 551-590 is disordered; it reads SASKHRRKMRKVDGGRRHGISAANPYGRKGGDDKRQFARF. Residues 579–590 show a composition bias toward basic and acidic residues; sequence KGGDDKRQFARF.

The protein belongs to the DEAD box helicase family. DDX18/HAS1 subfamily.

It catalyses the reaction ATP + H2O = ADP + phosphate + H(+). This chain is DEAD-box ATP-dependent RNA helicase 27, found in Oryza sativa subsp. japonica (Rice).